The sequence spans 84 residues: UPF0473 protein CPF_2030 (84 aa).

It belongs to the UPF0473 family.

The chain is UPF0473 protein CPF_2030 from Clostridium perfringens (strain ATCC 13124 / DSM 756 / JCM 1290 / NCIMB 6125 / NCTC 8237 / Type A).